The following is a 66-amino-acid chain: Large ribosomal subunit protein bL31 (66 aa).

Positions 16, 18, 36, and 39 each coordinate Zn(2+).

It belongs to the bacterial ribosomal protein bL31 family. Type A subfamily. In terms of assembly, part of the 50S ribosomal subunit. It depends on Zn(2+) as a cofactor.

Binds the 23S rRNA. This chain is Large ribosomal subunit protein bL31, found in Moorella thermoacetica (strain ATCC 39073 / JCM 9320).